Here is a 60-residue protein sequence, read N- to C-terminus: Metallothionein A (60 aa).

The beta stretch occupies residues 1–28; sequence MDPCECSKSGTCNCGGSCTCTNCSCKSC. A divalent metal cation-binding residues include Cys-4, Cys-6, Cys-12, Cys-14, Cys-18, Cys-20, Cys-23, Cys-25, Cys-28, Cys-32, Cys-33, Cys-35, Cys-36, Cys-40, Cys-43, Cys-47, Cys-49, Cys-54, Cys-58, and Cys-59. The interval 29 to 60 is alpha; sequence KKSCCPCCPSGCTKCASGCVCKGKTCDTSCCQ.

Belongs to the metallothionein superfamily. Type 1 family.

In terms of biological role, metallothioneins have a high content of cysteine residues that bind various heavy metals. The polypeptide is Metallothionein A (mta) (Chionodraco rastrospinosus (Ocellated icefish)).